The chain runs to 56 residues: Mitoregulin (56 aa).

Over 2–9 (ADVSERTL) the chain is Mitochondrial matrix. The helical transmembrane segment at 10 to 27 (QVSVLVAFASGVVLGWQA) threads the bilayer. Topologically, residues 28-56 (NRLRRRYLDWRKRRLQDKLATTQKKLDLA) are mitochondrial intermembrane.

Belongs to the mitoregulin family. In terms of assembly, interacts with mitochondrial trifunctional enzyme, a heterotetrameric complex composed of 2 HADHA subunits and 2 HADHB subunits. Interacts with cytochrome b5 reductase CYB5R3; the interaction is required to maintain cellular lipid composition and leads to stimulation of mitochondrial respiratory complex I activity. Interacts with ATP synthase subunit ATP5F1B/ATP5B. Enriched in heart and skeletal muscle (at protein level). Also enriched in adipose tissue with lower levels detected in liver, pancreas and brain (at protein level). Higher levels in differentiated myotubes than in satellite cells.

It is found in the mitochondrion inner membrane. Its function is as follows. Positively regulates mitochondrial complex assembly and/or stability. Increases mitochondrial membrane potential while decreasing mitochondrial reactive oxygen species. Increases mitochondrial respiration rate. Increased mitochondrial respiratory activity promotes myogenic differentiation which facilitates muscle growth and regeneration. Increases mitochondrial calcium retention capacity. Plays a role in maintenance of cellular lipid composition through its interaction with cytochrome b5 reductase CYB5R3 which is required for mitochondrial respiratory complex I activity. Interacts with the mitochondrial trifunctional enzyme complex (MTE) and enhances fatty acid beta-oxidation. Not required for MTE formation or stability. Modulates triglyceride clearance in adipocytes through its role in regulating fatty acid beta-oxidation and lipolysis. The sequence is that of Mitoregulin from Mus musculus (Mouse).